The chain runs to 366 residues: Aminomethyltransferase (366 aa).

Belongs to the GcvT family. In terms of assembly, the glycine cleavage system is composed of four proteins: P, T, L and H.

The enzyme catalyses N(6)-[(R)-S(8)-aminomethyldihydrolipoyl]-L-lysyl-[protein] + (6S)-5,6,7,8-tetrahydrofolate = N(6)-[(R)-dihydrolipoyl]-L-lysyl-[protein] + (6R)-5,10-methylene-5,6,7,8-tetrahydrofolate + NH4(+). The glycine cleavage system catalyzes the degradation of glycine. The chain is Aminomethyltransferase from Bacillus cereus (strain 03BB102).